A 595-amino-acid polypeptide reads, in one-letter code: Protein kinase C iota type (595 aa).

Residues 1 to 12 (MPTQRDSSTMSH) are compositionally biased toward polar residues. Residues 1-21 (MPTQRDSSTMSHTVACGGGGD) form a disordered region. At Pro2 the chain carries N-acetylproline. Residues 2-28 (PTQRDSSTMSHTVACGGGGDHSHQVRV) are required for interaction with RAB2. Residues 2 to 252 (PTQRDSSTMS…KASSSLGLQD (251 aa)) form a regulatory domain region. The residue at position 3 (Thr3) is a Phosphothreonine. Phosphoserine is present on residues Ser7 and Ser8. Residue Thr9 is modified to Phosphothreonine. The 84-residue stretch at 25–108 (QVRVKAYYRG…SELLIHVFPC (84 aa)) folds into the PB1 domain. The tract at residues 72–91 (DEEGDPCTVSSQLELEEAFR) is interaction with PARD6A. Positions 125 to 134 (YRRGARRWRK) match the Pseudosubstrate motif. The segment at 140–190 (GHTFQAKRFNRRAHCAICTDRIWGLGRQGYKCINCKLLVHKKCHKLVTIEC) adopts a Phorbol-ester/DAG-type zinc-finger fold. The Protein kinase domain occupies 253–521 (FDLLRVIGRG…FADIQGHPFF (269 aa)). 259-267 (IGRGSYAKV) serves as a coordination point for ATP. Residues Tyr264 and Tyr279 each carry the phosphotyrosine; by SRC modification. Lys282 lines the ATP pocket. The residue at position 333 (Tyr333) is a Phosphotyrosine; by SRC. Catalysis depends on Asp377, which acts as the Proton acceptor. 2 positions are modified to phosphothreonine: Thr411 and Thr563. Positions 522 to 593 (RNVDWDMMEQ…INPLLMSAEE (72 aa)) constitute an AGC-kinase C-terminal domain.

It belongs to the protein kinase superfamily. AGC Ser/Thr protein kinase family. PKC subfamily. In terms of assembly, forms a complex with SQSTM1 and MP2K5. Interacts directly with SQSTM1. Interacts with IKBKB. Interacts with PARD6A, PARD6B and PARD6G. Part of a quaternary complex containing aPKC, PARD3, a PARD6 protein (PARD6A, PARD6B or PARD6G) and a GTPase protein (CDC42 or RAC1). Part of a complex with LLGL1 and PARD6B. Interacts with ADAP1/CENTA1. Interaction with SMG1, through the ZN-finger domain, activates the kinase activity. Interacts with CDK7. Forms a complex with RAB2A and GAPDH involved in recruitment onto the membrane of vesicular tubular clusters (VTCs). Interacts with ECT2 ('Thr-359' phosphorylated form). Interacts with VAMP2. Interacts with WDFY2 (via WD repeats 1-3). Post-translationally, phosphorylation at Thr-411 in the activation loop is not mandatory for activation. Upon neuronal growth factor (NGF) stimulation, phosphorylated by SRC at Tyr-264, Tyr-279 and Tyr-333. Phosphorylation on Tyr-264 facilitates binding to KPNB1/importin-beta regulating entry of PRKCI into the nucleus. Phosphorylation on Tyr-333 is important for NF-kappa-B stimulation. Phosphorylated at Thr-563 during the initial phase of long term potentiation.

It localises to the cytoplasm. Its subcellular location is the membrane. It is found in the endosome. The protein resides in the nucleus. It carries out the reaction L-seryl-[protein] + ATP = O-phospho-L-seryl-[protein] + ADP + H(+). The catalysed reaction is L-threonyl-[protein] + ATP = O-phospho-L-threonyl-[protein] + ADP + H(+). With respect to regulation, atypical PKCs (PRKCI and PRKCZ) exhibit an elevated basal enzymatic activity (that may be due to the interaction with SMG1 or SQSTM1) and are not regulated by diacylglycerol, phosphatidylserine, phorbol esters or calcium ions. Two specific sites, Thr-411 (activation loop of the kinase domain) and Thr-563 (turn motif), need to be phosphorylated for its full activation. Might also be a target for novel lipid activators that are elevated during nutrient-stimulated insulin secretion. Its function is as follows. Calcium- and diacylglycerol-independent serine/ threonine-protein kinase that plays a general protective role against apoptotic stimuli, is involved in NF-kappa-B activation, cell survival, differentiation and polarity, and contributes to the regulation of microtubule dynamics in the early secretory pathway. Is necessary for BCR-ABL oncogene-mediated resistance to apoptotic drug in leukemia cells, protecting leukemia cells against drug-induced apoptosis. In cultured neurons, prevents amyloid beta protein-induced apoptosis by interrupting cell death process at a very early step. In glioblastoma cells, may function downstream of phosphatidylinositol 3-kinase (PI3K) and PDPK1 in the promotion of cell survival by phosphorylating and inhibiting the pro-apoptotic factor BAD. Can form a protein complex in non-small cell lung cancer (NSCLC) cells with PARD6A and ECT2 and regulate ECT2 oncogenic activity by phosphorylation, which in turn promotes transformed growth and invasion. In response to nerve growth factor (NGF), acts downstream of SRC to phosphorylate and activate IRAK1, allowing the subsequent activation of NF-kappa-B and neuronal cell survival. Functions in the organization of the apical domain in epithelial cells by phosphorylating EZR. This step is crucial for activation and normal distribution of EZR at the early stages of intestinal epithelial cell differentiation. Forms a protein complex with LLGL1 and PARD6B independently of PARD3 to regulate epithelial cell polarity. Plays a role in microtubule dynamics in the early secretory pathway through interaction with RAB2A and GAPDH and recruitment to vesicular tubular clusters (VTCs). In human coronary artery endothelial cells (HCAEC), is activated by saturated fatty acids and mediates lipid-induced apoptosis. Downstream of PI3K is required for insulin-stimulated glucose transport. Activates RAB4A and promotes its association with KIF3A which is required for the insulin-induced SLC2A4/GLUT4 translocation in adipocytes. Is essential in early embryogenesis and development of differentiating photoreceptors by playing a role in the establishment of epithelial and neuronal polarity. Involved in early synaptic long term potentiation phase in CA1 hippocampal cells and short term memory formation. This chain is Protein kinase C iota type (Prkci), found in Mus musculus (Mouse).